A 349-amino-acid chain; its full sequence is Core protein VP7 (349 aa).

N-linked (GlcNAc...) asparagine; by host glycans are attached at residues Asn148 and Asn287.

It belongs to the orbivirus VP7 family.

The protein localises to the virion. In terms of biological role, the VP7 protein is one of the five proteins (with VP1, VP3, VP4, and VP6) which form the inner capsid of the virus. This chain is Core protein VP7 (Segment-7), found in Epizootic hemorrhagic disease virus 1 (EHDV-1).